The primary structure comprises 99 residues: U2-theraphotoxin-Lsp1a (99 aa).

An N-terminal signal peptide occupies residues 1–22; it reads MNTIQVIIFAVVLVLTVTVGQA. Residues 23–57 constitute a propeptide that is removed on maturation; the sequence is DEDSPEASLLRKLKEAEASLFGQNLEESRNSRQKR. 3 disulfides stabilise this stretch: C58–C73, C65–C78, and C72–C93.

It belongs to the neurotoxin 14 (magi-1) family. 08 (Ltx-4) subfamily. Expressed by the venom gland.

The protein resides in the secreted. Its function is as follows. Insecticidal neurotoxin. The sequence is that of U2-theraphotoxin-Lsp1a from Lasiodora sp. (strain IBSP 8539) (Brazilian salmon pink birdeater).